The primary structure comprises 484 residues: Siroheme synthase 1 (484 aa).

The precorrin-2 dehydrogenase /sirohydrochlorin ferrochelatase stretch occupies residues Met-1–Leu-205. NAD(+) contacts are provided by residues Glu-22–Ala-23 and Pro-43–Val-44. The residue at position 130 (Ser-130) is a Phosphoserine. The interval Gly-220–Asp-484 is uroporphyrinogen-III C-methyltransferase. An S-adenosyl-L-methionine-binding site is contributed by Pro-229. The active-site Proton acceptor is the Asp-252. Lys-274 functions as the Proton donor in the catalytic mechanism. S-adenosyl-L-methionine is bound by residues Gly-305 to Asp-307, Leu-310, Ser-335 to Ala-336, Met-387, and Ala-416.

It in the N-terminal section; belongs to the precorrin-2 dehydrogenase / sirohydrochlorin ferrochelatase family. In the C-terminal section; belongs to the precorrin methyltransferase family.

It carries out the reaction uroporphyrinogen III + 2 S-adenosyl-L-methionine = precorrin-2 + 2 S-adenosyl-L-homocysteine + H(+). It catalyses the reaction precorrin-2 + NAD(+) = sirohydrochlorin + NADH + 2 H(+). The catalysed reaction is siroheme + 2 H(+) = sirohydrochlorin + Fe(2+). It functions in the pathway cofactor biosynthesis; adenosylcobalamin biosynthesis; precorrin-2 from uroporphyrinogen III: step 1/1. It participates in cofactor biosynthesis; adenosylcobalamin biosynthesis; sirohydrochlorin from precorrin-2: step 1/1. Its pathway is porphyrin-containing compound metabolism; siroheme biosynthesis; precorrin-2 from uroporphyrinogen III: step 1/1. The protein operates within porphyrin-containing compound metabolism; siroheme biosynthesis; siroheme from sirohydrochlorin: step 1/1. It functions in the pathway porphyrin-containing compound metabolism; siroheme biosynthesis; sirohydrochlorin from precorrin-2: step 1/1. Functionally, multifunctional enzyme that catalyzes the SAM-dependent methylations of uroporphyrinogen III at position C-2 and C-7 to form precorrin-2 via precorrin-1. Then it catalyzes the NAD-dependent ring dehydrogenation of precorrin-2 to yield sirohydrochlorin. Finally, it catalyzes the ferrochelation of sirohydrochlorin to yield siroheme. In Halorhodospira halophila (strain DSM 244 / SL1) (Ectothiorhodospira halophila (strain DSM 244 / SL1)), this protein is Siroheme synthase 1.